The following is an 80-amino-acid chain: Omega-conotoxin-like 1 (80 aa).

A signal peptide spans 1-22 (MKLTCVLIVVVLFLTACQLITT). The propeptide occupies 23–49 (DDSTGKQRYQAWKLRSKMQNSVLSRLS). Cystine bridges form between C52–C66, C59–C70, and C65–C79.

The protein belongs to the conotoxin O1 superfamily. In terms of processing, peptide predicted to begin at Arg-51, but it seems more probable that it begins at Cys-52, since this position corresponds to a dibasic residue cleavage. In terms of tissue distribution, expressed by the venom duct.

Its subcellular location is the secreted. Functionally, omega-conotoxins act at presynaptic membranes, they bind and block voltage-gated calcium channels (Cav). In Conus capitaneus (Captain cone), this protein is Omega-conotoxin-like 1.